Consider the following 194-residue polypeptide: dTTP/UTP pyrophosphatase (194 aa).

D76 functions as the Proton acceptor in the catalytic mechanism.

This sequence belongs to the Maf family. YhdE subfamily. The cofactor is a divalent metal cation.

Its subcellular location is the cytoplasm. It carries out the reaction dTTP + H2O = dTMP + diphosphate + H(+). The catalysed reaction is UTP + H2O = UMP + diphosphate + H(+). Functionally, nucleoside triphosphate pyrophosphatase that hydrolyzes dTTP and UTP. May have a dual role in cell division arrest and in preventing the incorporation of modified nucleotides into cellular nucleic acids. The sequence is that of dTTP/UTP pyrophosphatase from Shewanella sp. (strain MR-7).